A 205-amino-acid polypeptide reads, in one-letter code: Putative 3-methyladenine DNA glycosylase (205 aa).

The protein belongs to the DNA glycosylase MPG family.

In Bacillus anthracis (strain A0248), this protein is Putative 3-methyladenine DNA glycosylase.